We begin with the raw amino-acid sequence, 472 residues long: Serine/threonine-protein phosphatase T (472 aa).

TPR repeat units follow at residues 7–40 (ADKL…TKTP), 41–73 (TLFC…EPTF), and 74–107 (AKAY…APQN). Residues D217, H219, D246, and N278 each contribute to the Mn(2+) site. H279 (proton donor/acceptor) is an active-site residue. The Mn(2+) site is built by H327 and H403.

This sequence belongs to the PPP phosphatase family. PP-5 (PP-T) subfamily. The cofactor is Mg(2+). Mn(2+) is required as a cofactor.

It is found in the cytoplasm. It localises to the cytosol. The protein localises to the nucleus. It catalyses the reaction O-phospho-L-seryl-[protein] + H2O = L-seryl-[protein] + phosphate. The catalysed reaction is O-phospho-L-threonyl-[protein] + H2O = L-threonyl-[protein] + phosphate. Its activity is regulated as follows. Activated by arachidonic acid. Its function is as follows. May function as a protein phosphatase. This is Serine/threonine-protein phosphatase T from Trypanosoma brucei brucei (strain 927/4 GUTat10.1).